The following is a 164-amino-acid chain: Cell division protein SepF (164 aa).

The segment at 29–57 (INKGRGASQQEYDEYYEDSTPTVTQKEDP) is disordered.

It belongs to the SepF family. Homodimer. Interacts with FtsZ.

Its subcellular location is the cytoplasm. Its function is as follows. Cell division protein that is part of the divisome complex and is recruited early to the Z-ring. Probably stimulates Z-ring formation, perhaps through the cross-linking of FtsZ protofilaments. Its function overlaps with FtsA. In Exiguobacterium sibiricum (strain DSM 17290 / CCUG 55495 / CIP 109462 / JCM 13490 / 255-15), this protein is Cell division protein SepF.